Here is a 619-residue protein sequence, read N- to C-terminus: Laccase (619 aa).

A signal peptide spans 1–21 (MKFLGIAALVAGLLAPSLVLG). The propeptide occupies 22 to 49 (APAPGTEGVNLLTPVDKRQDSQAERYGG). Residues C55 and C63 are joined by a disulfide bond. Plastocyanin-like domains lie at 84 to 207 (TRRY…IVIN) and 216 to 373 (VDLG…LPTN). A glycan (N-linked (GlcNAc...) asparagine) is linked at N139. Residues H144, H146, H189, and H191 each coordinate Cu cation. Disulfide bonds link C165–C586 and C349–C383. 3 N-linked (GlcNAc...) asparagine glycosylation sites follow: N282, N295, and N340. N-linked (GlcNAc...) asparagine glycans are attached at residues N422 and N444. Positions 431-566 (NKPVLEYVLT…GGLSNQFLER (136 aa)) constitute a Plastocyanin-like 3 domain. H477, H480, H482, H548, C549, H550, and H554 together coordinate Cu cation. Residues 607-619 (RSGVKAREVKMKW) constitute a propeptide that is removed on maturation.

This sequence belongs to the multicopper oxidase family. Cu cation is required as a cofactor.

It is found in the secreted. It catalyses the reaction 4 hydroquinone + O2 = 4 benzosemiquinone + 2 H2O. Lignin degradation and detoxification of lignin-derived products. This Neurospora crassa (strain ATCC 24698 / 74-OR23-1A / CBS 708.71 / DSM 1257 / FGSC 987) protein is Laccase (lacc).